Reading from the N-terminus, the 290-residue chain is MGKGLALDIGGTKIAVAVVTESGMLIGRQQIATPRGGAGQLAAALETLIAPYRHQVDFIAVASTGIISGGRLTALNPANLGGLADFPLYDCIRSISDLPCVLLNDGQAAAWAEYQALGDKNDNMMFVTVSTGVGGGIILNKKLLVGQRGLAGHIGHTLSDPHGVLCGCGRRGCVESVASGTAIGAETLGWKQPVSAATVFDMAQQGDAQAGKVINRSAAAIAQMLADMKMALDLEVVILGGSVGLAVGYLERVVAAQKTLPGIYRVPVQEAHHRQDSGLLGAALWARTSL.

ATP contacts are provided by residues 6 to 13 (ALDIGGTK) and 132 to 139 (GVGGGIIL). Zn(2+) contacts are provided by H156, C166, C168, and C173.

Belongs to the ROK (NagC/XylR) family. NanK subfamily. Homodimer.

The enzyme catalyses an N-acyl-D-mannosamine + ATP = an N-acyl-D-mannosamine 6-phosphate + ADP + H(+). The protein operates within amino-sugar metabolism; N-acetylneuraminate degradation; D-fructose 6-phosphate from N-acetylneuraminate: step 2/5. Catalyzes the phosphorylation of N-acetylmannosamine (ManNAc) to ManNAc-6-P. This Yersinia pestis (strain Pestoides F) protein is N-acetylmannosamine kinase.